Here is a 513-residue protein sequence, read N- to C-terminus: ATP synthase subunit alpha (513 aa).

171 to 178 serves as a coordination point for ATP; it reads GDRQIGKT.

It belongs to the ATPase alpha/beta chains family. In terms of assembly, F-type ATPases have 2 components, CF(1) - the catalytic core - and CF(0) - the membrane proton channel. CF(1) has five subunits: alpha(3), beta(3), gamma(1), delta(1), epsilon(1). CF(0) has three main subunits: a(1), b(2) and c(9-12). The alpha and beta chains form an alternating ring which encloses part of the gamma chain. CF(1) is attached to CF(0) by a central stalk formed by the gamma and epsilon chains, while a peripheral stalk is formed by the delta and b chains.

It localises to the cell membrane. The catalysed reaction is ATP + H2O + 4 H(+)(in) = ADP + phosphate + 5 H(+)(out). Produces ATP from ADP in the presence of a proton gradient across the membrane. The alpha chain is a regulatory subunit. The chain is ATP synthase subunit alpha from Wolbachia pipientis subsp. Culex pipiens (strain wPip).